The primary structure comprises 920 residues: Dynamin-2B (920 aa).

Met1 bears the N-acetylmethionine mark. The region spanning 35 to 303 (PATSLNVVAL…IRSRMKLRLP (269 aa)) is the Dynamin-type G domain. Positions 45-52 (GNVGAGKS) are G1 motif. Residue 45–53 (GNVGAGKSA) coordinates GTP. The G2 motif stretch occupies residues 71 to 73 (ATR). Residues 143-146 (DLPG) are G3 motif. The G4 motif stretch occupies residues 204–207 (SKID). 204-210 (SKIDQAA) contributes to the GTP binding site. The tract at residues 238 to 241 (ALIG) is G5 motif. 246–249 (IASA) contacts GTP. A compositionally biased stretch (basic and acidic residues) spans 507–522 (RREEELKGRSSKKGQD). 2 disordered regions span residues 507–577 (RREE…TAGP) and 632–657 (IEEI…PDSK). Over residues 523 to 545 (AEQSLLNRATSPQPDGPSSTGGS) the composition is skewed to polar residues. 2 stretches are compositionally biased toward basic and acidic residues: residues 548–567 (SLRD…KETP) and 641–652 (EKSKSSKDKKSN). Positions 579 to 703 (GEITAGYLMK…WINKLQKVIQ (125 aa)) constitute a PH domain. Residues 737-830 (LRWMSQEVRG…QLSIHDNRAA (94 aa)) form the GED domain. Residues 747 to 761 (YVEAVLNSLAANVPK) form an important for homodimerization region. The stretch at 788 to 812 (NERIESLIQEDQNVKRRRDRYQKQS) forms a coiled coil. Residues 828 to 920 (RAAAASSWSD…PPQSGSSYRY (93 aa)) are disordered. Residues 833-849 (SSWSDNSGTESSPRTNG) show a composition bias toward polar residues.

The protein belongs to the TRAFAC class dynamin-like GTPase superfamily. Dynamin/Fzo/YdjA family. Interacts with DRP1A at the plasma membrane and in forming clathrin-coated vesicles (CCV). In terms of tissue distribution, ubiquitous. Preferentially expressed in siliques.

It is found in the cytoplasm. The protein resides in the cytoskeleton. The protein localises to the cytoplasmic vesicle. It localises to the clathrin-coated vesicle. Its subcellular location is the cell membrane. The catalysed reaction is GTP + H2O = GDP + phosphate + H(+). Functionally, putative microtubule-associated force-producing protein, able to bind and hydrolyze GTP. Collaboratively with DRP1A, participates in clathrin-coated vesicle formation during endocytosis. With DRP1A and PIP5K3, required for the precise coordination of polar ARAC3/ROP6 and ARAC4/ROP2 placement and subsequent root hair positioning during planar polarity formation in root hair-forming cells. This Arabidopsis thaliana (Mouse-ear cress) protein is Dynamin-2B.